Consider the following 239-residue polypeptide: Claudin-14 (239 aa).

Topologically, residues 1–7 (MASTAVQ) are cytoplasmic. Residues 8–28 (LLGFLLSFLGMVGTLITTILP) form a helical membrane-spanning segment. Over 29-81 (HWRRTAHVGTNILTAVSYLKGLWMECVWHSTGIYQCQIYRSLLALPRDLQAAR) the chain is Extracellular. The chain crosses the membrane as a helical span at residues 82–102 (ALMVISCLLSGMACACAVVGM). The Cytoplasmic segment spans residues 103 to 115 (KCTRCAKGTPAKT). Residues 116–136 (TFAVLGGALFLLAGLLCMVAV) traverse the membrane as a helical segment. Topologically, residues 137–162 (SWTTNDVVQNFYNPLLPSGMKFEIGQ) are extracellular. The chain crosses the membrane as a helical span at residues 163–183 (ALYLGFISSSLSLIGGTLLCL). Residues 184-239 (SCQDEAPYRPYPPQSRAGATTTATAPAYRPPAAYKDNRAPSVTSAAHSGYRLNDYV) lie on the Cytoplasmic side of the membrane.

Belongs to the claudin family. As to expression, expressed in all sensory epithelia of the inner ear vestibular organs, as well as in liver and kidney.

Its subcellular location is the cell junction. The protein resides in the tight junction. The protein localises to the cell membrane. Its function is as follows. Plays a major role in tight junction-specific obliteration of the intercellular space, through calcium-independent cell-adhesion activity. In Mus musculus (Mouse), this protein is Claudin-14 (Cldn14).